Consider the following 194-residue polypeptide: Fe/S biogenesis protein NfuA (194 aa).

2 residues coordinate [4Fe-4S] cluster: Cys-152 and Cys-155.

Belongs to the NfuA family. In terms of assembly, homodimer. It depends on [4Fe-4S] cluster as a cofactor.

Involved in iron-sulfur cluster biogenesis. Binds a 4Fe-4S cluster, can transfer this cluster to apoproteins, and thereby intervenes in the maturation of Fe/S proteins. Could also act as a scaffold/chaperone for damaged Fe/S proteins. The polypeptide is Fe/S biogenesis protein NfuA (Pseudomonas fluorescens (strain Pf0-1)).